A 360-amino-acid polypeptide reads, in one-letter code: Peptide chain release factor 1 (360 aa).

An N5-methylglutamine modification is found at Gln-235. Residues 285–313 are disordered; sequence KRQQAEASTRRNLLGSGDRSDRNRTYNFP.

It belongs to the prokaryotic/mitochondrial release factor family. Post-translationally, methylated by PrmC. Methylation increases the termination efficiency of RF1.

It is found in the cytoplasm. Functionally, peptide chain release factor 1 directs the termination of translation in response to the peptide chain termination codons UAG and UAA. The polypeptide is Peptide chain release factor 1 (Klebsiella pneumoniae (strain 342)).